We begin with the raw amino-acid sequence, 468 residues long: 3-isopropylmalate dehydratase large subunit (468 aa).

Positions 347, 407, and 410 each coordinate [4Fe-4S] cluster.

This sequence belongs to the aconitase/IPM isomerase family. LeuC type 1 subfamily. Heterodimer of LeuC and LeuD. [4Fe-4S] cluster is required as a cofactor.

It carries out the reaction (2R,3S)-3-isopropylmalate = (2S)-2-isopropylmalate. Its pathway is amino-acid biosynthesis; L-leucine biosynthesis; L-leucine from 3-methyl-2-oxobutanoate: step 2/4. Functionally, catalyzes the isomerization between 2-isopropylmalate and 3-isopropylmalate, via the formation of 2-isopropylmaleate. This is 3-isopropylmalate dehydratase large subunit from Synechococcus sp. (strain CC9311).